A 382-amino-acid polypeptide reads, in one-letter code: Galactokinase (382 aa).

34–37 provides a ligand contact to substrate; it reads EHTD. 124–130 is an ATP binding site; sequence GAGLSSS. Residues Ser130 and Glu162 each coordinate Mg(2+). The active-site Proton acceptor is the Asp174. Tyr223 serves as a coordination point for substrate.

It belongs to the GHMP kinase family. GalK subfamily.

It is found in the cytoplasm. The enzyme catalyses alpha-D-galactose + ATP = alpha-D-galactose 1-phosphate + ADP + H(+). The protein operates within carbohydrate metabolism; galactose metabolism. Its function is as follows. Catalyzes the transfer of the gamma-phosphate of ATP to D-galactose to form alpha-D-galactose-1-phosphate (Gal-1-P). In Salmonella typhi, this protein is Galactokinase.